The sequence spans 155 residues: Troponin C, body wall muscle (155 aa).

Residue Val-1 is modified to N-acetylvaline. EF-hand domains lie at 7–43 (DEKS…LGQN), 44–79 (PTEK…QMQA), 88–121 (REEK…TGEN), and 122–155 (VETW…KFVQ). Ca(2+)-binding residues include Asp-57, Asp-59, Ser-61, Thr-63, and Glu-68. Asp-135, Asn-137, Asp-139, Gln-141, and Glu-146 together coordinate Ca(2+).

Belongs to the troponin C family.

Functionally, troponin is the central regulatory protein of muscle contraction. Tn consists of three components: Tn-I which is the inhibitor of actomyosin ATPase, Tn-T which contains the binding site for tropomyosin and Tn-C. The binding of calcium to Tn-C abolishes the inhibitory action of Tn on actin filaments. In Halocynthia roretzi (Sea squirt), this protein is Troponin C, body wall muscle.